A 234-amino-acid polypeptide reads, in one-letter code: 3-dehydroquinate dehydratase (234 aa).

Residues 33-35 (EWR) and arginine 68 contribute to the 3-dehydroquinate site. Histidine 124 serves as the catalytic Proton donor/acceptor. Lysine 151 acts as the Schiff-base intermediate with substrate in catalysis. Positions 193, 214, and 218 each coordinate 3-dehydroquinate.

The protein belongs to the type-I 3-dehydroquinase family. In terms of assembly, homodimer.

The catalysed reaction is 3-dehydroquinate = 3-dehydroshikimate + H2O. It participates in metabolic intermediate biosynthesis; chorismate biosynthesis; chorismate from D-erythrose 4-phosphate and phosphoenolpyruvate: step 3/7. Functionally, involved in the third step of the chorismate pathway, which leads to the biosynthesis of aromatic amino acids. Catalyzes the cis-dehydration of 3-dehydroquinate (DHQ) and introduces the first double bond of the aromatic ring to yield 3-dehydroshikimate. This Syntrophobacter fumaroxidans (strain DSM 10017 / MPOB) protein is 3-dehydroquinate dehydratase.